Here is a 230-residue protein sequence, read N- to C-terminus: UPF0758 protein Daud_1467 (230 aa).

Residues 108 to 230 (TVRTPEEAAG…FTSLKLEGLF (123 aa)) form the MPN domain. Residues histidine 179, histidine 181, and aspartate 192 each coordinate Zn(2+). The JAMM motif motif lies at 179–192 (HNHPSGDPAPSPQD).

The protein belongs to the UPF0758 family.

This chain is UPF0758 protein Daud_1467, found in Desulforudis audaxviator (strain MP104C).